The primary structure comprises 1021 residues: Ankyrin repeat- and BTB/POZ domain-containing protein 3-A (1021 aa).

The helical transmembrane segment at 160–180 threads the bilayer; it reads MVLSWTISVNCITAALSALSL. ANK repeat units follow at residues 515–544, 561–590, 599–628, and 642–671; these read QGMT…DINS, RQGT…NVEG, YTET…DPLI, and GEMN…KDKG. The region spanning 836–902 is the BTB domain; that stretch reads SDVTFLVEGK…LYCGGTESLH (67 aa).

It localises to the membrane. In Danio rerio (Zebrafish), this protein is Ankyrin repeat- and BTB/POZ domain-containing protein 3-A (abtb3a).